A 296-amino-acid chain; its full sequence is Light-independent protochlorophyllide reductase iron-sulfur ATP-binding protein (296 aa).

ATP-binding positions include 10-15 (GIGKST) and K39. Position 14 (S14) interacts with Mg(2+). Residues C95 and C129 each contribute to the [4Fe-4S] cluster site. Position 180 to 181 (180 to 181 (NR)) interacts with ATP.

This sequence belongs to the NifH/BchL/ChlL family. As to quaternary structure, homodimer. Protochlorophyllide reductase is composed of three subunits; ChlL, ChlN and ChlB. Requires [4Fe-4S] cluster as cofactor.

It is found in the plastid. It localises to the chloroplast. The catalysed reaction is chlorophyllide a + oxidized 2[4Fe-4S]-[ferredoxin] + 2 ADP + 2 phosphate = protochlorophyllide a + reduced 2[4Fe-4S]-[ferredoxin] + 2 ATP + 2 H2O. It functions in the pathway porphyrin-containing compound metabolism; chlorophyll biosynthesis (light-independent). Functionally, component of the dark-operative protochlorophyllide reductase (DPOR) that uses Mg-ATP and reduced ferredoxin to reduce ring D of protochlorophyllide (Pchlide) to form chlorophyllide a (Chlide). This reaction is light-independent. The L component serves as a unique electron donor to the NB-component of the complex, and binds Mg-ATP. The polypeptide is Light-independent protochlorophyllide reductase iron-sulfur ATP-binding protein (Chlorokybus atmophyticus (Soil alga)).